A 329-amino-acid polypeptide reads, in one-letter code: GTPase Obg (329 aa).

Residues 1-159 (MQFIDEAKIF…MWVWLHLKLL (159 aa)) form the Obg domain. Positions 160-327 (SDVGLVGLPN…LLANILSELQ (168 aa)) constitute an OBG-type G domain. GTP-binding positions include 166–173 (GLPNAGKS), 191–195 (FTTLT), 212–215 (DIPG), 279–282 (TKTD), and 308–310 (SSY). Mg(2+)-binding residues include S173 and T193.

The protein belongs to the TRAFAC class OBG-HflX-like GTPase superfamily. OBG GTPase family. As to quaternary structure, monomer. Mg(2+) serves as cofactor.

The protein resides in the cytoplasm. In terms of biological role, an essential GTPase which binds GTP, GDP and possibly (p)ppGpp with moderate affinity, with high nucleotide exchange rates and a fairly low GTP hydrolysis rate. Plays a role in control of the cell cycle, stress response, ribosome biogenesis and in those bacteria that undergo differentiation, in morphogenesis control. In Orientia tsutsugamushi (strain Ikeda) (Rickettsia tsutsugamushi), this protein is GTPase Obg.